Consider the following 437-residue polypeptide: CCA-adding enzyme (437 aa).

The ATP site is built by Ser50 and Lys53. CTP-binding residues include Ser50 and Lys53. The Mg(2+) site is built by Asp61, Asp63, and Asp112. Residues His135, Lys155, and Tyr164 each coordinate ATP. Positions 135, 155, and 164 each coordinate CTP.

Belongs to the tRNA nucleotidyltransferase/poly(A) polymerase family. Archaeal CCA-adding enzyme subfamily. As to quaternary structure, homodimer. It depends on Mg(2+) as a cofactor.

The enzyme catalyses a tRNA precursor + 2 CTP + ATP = a tRNA with a 3' CCA end + 3 diphosphate. It catalyses the reaction a tRNA with a 3' CCA end + 2 CTP + ATP = a tRNA with a 3' CCACCA end + 3 diphosphate. In terms of biological role, catalyzes the addition and repair of the essential 3'-terminal CCA sequence in tRNAs without using a nucleic acid template. Adds these three nucleotides in the order of C, C, and A to the tRNA nucleotide-73, using CTP and ATP as substrates and producing inorganic pyrophosphate. tRNA 3'-terminal CCA addition is required both for tRNA processing and repair. Also involved in tRNA surveillance by mediating tandem CCA addition to generate a CCACCA at the 3' terminus of unstable tRNAs. While stable tRNAs receive only 3'-terminal CCA, unstable tRNAs are marked with CCACCA and rapidly degraded. This Thermoplasma volcanium (strain ATCC 51530 / DSM 4299 / JCM 9571 / NBRC 15438 / GSS1) protein is CCA-adding enzyme.